The chain runs to 110 residues: Protein YcgL (110 aa).

A YcgL domain is found at 14–98 (MFCVIYRSSK…PPEDLLKQHL (85 aa)). The segment at 88–110 (PPPEDLLKQHLSSVGQNTSHADR) is disordered. Polar residues predominate over residues 97–110 (HLSSVGQNTSHADR).

This is Protein YcgL from Salmonella typhi.